Consider the following 125-residue polypeptide: Steroid Delta-isomerase (125 aa).

The Proton donor role is filled by Tyr14. Catalysis depends on Asp38, which acts as the Proton acceptor. A substrate-binding site is contributed by Asp99.

Homodimer.

It carries out the reaction a 3-oxo-Delta(5)-steroid = a 3-oxo-Delta(4)-steroid. This chain is Steroid Delta-isomerase (ksi), found in Comamonas testosteroni (Pseudomonas testosteroni).